Reading from the N-terminus, the 344-residue chain is Dihydroorotase (344 aa).

Zn(2+)-binding residues include histidine 14 and histidine 16. Residues 16–18 (HVR) and asparagine 42 contribute to the substrate site. The Zn(2+) site is built by lysine 99, histidine 136, and histidine 174. N6-carboxylysine is present on lysine 99. Histidine 136 contacts substrate. Residue leucine 219 coordinates substrate. Residue aspartate 247 coordinates Zn(2+). The active site involves aspartate 247. Histidine 251 and alanine 263 together coordinate substrate.

It belongs to the metallo-dependent hydrolases superfamily. DHOase family. Class II DHOase subfamily. Homodimer. Zn(2+) serves as cofactor.

It catalyses the reaction (S)-dihydroorotate + H2O = N-carbamoyl-L-aspartate + H(+). It participates in pyrimidine metabolism; UMP biosynthesis via de novo pathway; (S)-dihydroorotate from bicarbonate: step 3/3. Catalyzes the reversible cyclization of carbamoyl aspartate to dihydroorotate. The polypeptide is Dihydroorotase (Leptothrix cholodnii (strain ATCC 51168 / LMG 8142 / SP-6) (Leptothrix discophora (strain SP-6))).